A 202-amino-acid polypeptide reads, in one-letter code: MGNTKSGALSKEILEELQLNTKFTQEELCTWYQSFLKECPSGRISKKQFESIYSKFFPDADPKAYAQHVFRSFDANNDGTLDFKEYMIALMMTSSGKANQKLEWAFCLYDVDGNGTINKKEVLEIITAIFKMINAEDQKHLPEDENTPEKRTNKIWVYFGKKDDDKLTEGEFIQGIVKNKEILRLIQYEPQKVKDKLKEKKH.

Residue Gly2 is the site of N-myristoyl glycine attachment. 4 consecutive EF-hand domains span residues 25–60 (QEEL…FPDA), 61–96 (DPKA…TSSG), 97–132 (KANQ…IFKM), and 147–182 (TPEK…NKEI). Positions 74, 76, 78, 80, 85, 110, 112, 114, 116, and 121 each coordinate Ca(2+).

Belongs to the recoverin family. In terms of processing, the N-terminus is blocked.

Functionally, calcium-dependent regulator of light sensitivity of cGMP phosphodiesterase in rod outer segments. Controls rhodopsin phosphorylation in a Ca(2+)-dependent manner. The sequence is that of S-modulin from Aquarana catesbeiana (American bullfrog).